The sequence spans 284 residues: Bifunctional protein FolD (284 aa).

NADP(+)-binding positions include 166 to 168, Ser-191, and Ile-232; that span reads GAS.

The protein belongs to the tetrahydrofolate dehydrogenase/cyclohydrolase family. Homodimer.

The enzyme catalyses (6R)-5,10-methylene-5,6,7,8-tetrahydrofolate + NADP(+) = (6R)-5,10-methenyltetrahydrofolate + NADPH. It catalyses the reaction (6R)-5,10-methenyltetrahydrofolate + H2O = (6R)-10-formyltetrahydrofolate + H(+). The protein operates within one-carbon metabolism; tetrahydrofolate interconversion. Its function is as follows. Catalyzes the oxidation of 5,10-methylenetetrahydrofolate to 5,10-methenyltetrahydrofolate and then the hydrolysis of 5,10-methenyltetrahydrofolate to 10-formyltetrahydrofolate. This Neisseria gonorrhoeae (strain ATCC 700825 / FA 1090) protein is Bifunctional protein FolD.